The primary structure comprises 396 residues: Tryptophan synthase beta chain (396 aa).

Lysine 88 is modified (N6-(pyridoxal phosphate)lysine).

Belongs to the TrpB family. Tetramer of two alpha and two beta chains. Requires pyridoxal 5'-phosphate as cofactor.

The enzyme catalyses (1S,2R)-1-C-(indol-3-yl)glycerol 3-phosphate + L-serine = D-glyceraldehyde 3-phosphate + L-tryptophan + H2O. It participates in amino-acid biosynthesis; L-tryptophan biosynthesis; L-tryptophan from chorismate: step 5/5. The beta subunit is responsible for the synthesis of L-tryptophan from indole and L-serine. In Shewanella sp. (strain W3-18-1), this protein is Tryptophan synthase beta chain.